The chain runs to 68 residues: Cell division protein ZapB (68 aa).

Residues 3-58 (LELLSKLETKIQAALETIELLKMELEEEKQKNHTLNEQNQQLSQDLTSWNEKVTGL) are a coiled coil.

It belongs to the ZapB family. In terms of assembly, homodimer. The ends of the coiled-coil dimer bind to each other, forming polymers. Interacts with FtsZ.

It localises to the cytoplasm. Non-essential, abundant cell division factor that is required for proper Z-ring formation. It is recruited early to the divisome by direct interaction with FtsZ, stimulating Z-ring assembly and thereby promoting cell division earlier in the cell cycle. Its recruitment to the Z-ring requires functional FtsA or ZipA. This Shewanella loihica (strain ATCC BAA-1088 / PV-4) protein is Cell division protein ZapB.